We begin with the raw amino-acid sequence, 417 residues long: Brevican core protein (417 aa).

The N-terminal stretch at 1–22 (MAPLFLPLLIALALAPGPTASA) is a signal peptide. An Ig-like V-type domain is found at 23–155 (DVLEGDSSED…SSDAVEVKVK (133 aa)). 3 disulfide bridges follow: Cys57/Cys137, Cys179/Cys250, and Cys203/Cys224. A glycan (N-linked (GlcNAc...) asparagine) is linked at Asn130. 2 Link domains span residues 157–252 (VVFL…YCYA) and 257–354 (GELF…YCFR). An N-linked (GlcNAc...) asparagine glycan is attached at Asn267. 2 disulfide bridges follow: Cys277–Cys352 and Cys301–Cys322. N-linked (GlcNAc...) asparagine glycosylation occurs at Asn337.

It belongs to the aggrecan/versican proteoglycan family. In terms of tissue distribution, central nervous system.

It is found in the secreted. The protein resides in the extracellular space. It localises to the extracellular matrix. Functionally, may play a role in the terminally differentiating and the adult nervous system during postnatal development. Could stabilize interactions between hyaluronan (HA) and brain proteoglycans. The polypeptide is Brevican core protein (BCAN) (Felis catus (Cat)).